Here is a 630-residue protein sequence, read N- to C-terminus: Multidrug transporter TPO3 (630 aa).

A compositionally biased stretch (polar residues) spans 1 to 35; it reads MVDQESLVSFSSETSQSINSDIDIESQQQPRQYIP. 2 disordered regions span residues 1-46 and 107-157; these read MVDQ…KERL and TSTA…NQQP. A compositionally biased stretch (basic and acidic residues) spans 37–46; it reads NEKDGNKERL. Low complexity predominate over residues 125 to 137; the sequence is RRSQNIAASSNSS. The N-linked (GlcNAc...) asparagine glycan is linked to Asn135. Helical transmembrane passes span 190-210, 222-242, 252-272, 282-302, 312-332, 342-362, 423-443, 453-473, 494-514, 519-539, 553-575, and 587-607; these read ILSCLVICVAYGSACITGGLF, AAILSCSLMVIGFSLGPLIWS, LAYFISMGLYTIFNIPCALSP, FLCGVFSSSGLCLVGGSIADM, IAFFAFAPYTGPIIGPLVNGF, LIFWINMAFAGVMWIIVAFIP, FYVCLIYSLLYAFFFAFPVVF, LIGLMFIPILIGATMALATTF, LFGAMIGAPFAAAALWILGAT, IIWVGPASSGLAFGYGMVLIY, YASSALATKVFLRSAGGAAFPLF, and WASWLLAFISTAMILLPFGFY.

Belongs to the major facilitator superfamily. DHA1 family. Polyamines/proton antiporter (TC 2.A.1.2.16) subfamily.

The protein localises to the cell membrane. Functionally, cell membrane polyamine/proton antiporter, involved in the detoxification of excess polyamines in the cytoplasm. Involved in the resistance to the imidazole antifungal drugs tioconazole, miconazole, clotrimazole and ketoconazole; to the triazole fluconazole; but not to the antifungals flucytosine or amphotericin B. Plays a role in spermine homeostasis, but spermine accumulation in response to clotrimazole is independent of TPO3. This is Multidrug transporter TPO3 from Candida glabrata (strain ATCC 2001 / BCRC 20586 / JCM 3761 / NBRC 0622 / NRRL Y-65 / CBS 138) (Yeast).